The following is a 66-amino-acid chain: Large ribosomal subunit protein uL29 (66 aa).

It belongs to the universal ribosomal protein uL29 family.

This chain is Large ribosomal subunit protein uL29, found in Geobacillus thermodenitrificans (strain NG80-2).